The sequence spans 330 residues: Ornithine carbamoyltransferase (330 aa).

Residues 57-60 (STRT), glutamine 84, arginine 108, and 135-138 (HPTQ) contribute to the carbamoyl phosphate site. L-ornithine contacts are provided by residues asparagine 168, aspartate 232, and 236 to 237 (SM). Carbamoyl phosphate contacts are provided by residues 273–274 (CL) and arginine 318.

Belongs to the aspartate/ornithine carbamoyltransferase superfamily. OTCase family.

The protein resides in the cytoplasm. It carries out the reaction carbamoyl phosphate + L-ornithine = L-citrulline + phosphate + H(+). The protein operates within amino-acid biosynthesis; L-arginine biosynthesis; L-arginine from L-ornithine and carbamoyl phosphate: step 1/3. In terms of biological role, reversibly catalyzes the transfer of the carbamoyl group from carbamoyl phosphate (CP) to the N(epsilon) atom of ornithine (ORN) to produce L-citrulline. The chain is Ornithine carbamoyltransferase from Alkaliphilus metalliredigens (strain QYMF).